The primary structure comprises 220 residues: MAKNKFNTSWLHDHINDPYVKMAQREGYRARAAYKLKEIDEQDKLIRPGQVIVDLGAAPGSWSQYVRNKLSQGKHRDAQREGGIDGTIIALDLLPMEPIADVHFIQGDFREDNVLAQLEEVVGDRDVDLVISDMAPNLSGVAVADAARIEHVCDLALEFAQNHLKPDGALLVKCFHGSGYSQIVEKFKHQFKTVAARKPKASRDKSSETFILGRHLKRPR.

S-adenosyl-L-methionine contacts are provided by Gly60, Trp62, Asp92, Asp108, and Asp133. Lys173 acts as the Proton acceptor in catalysis.

The protein belongs to the class I-like SAM-binding methyltransferase superfamily. RNA methyltransferase RlmE family.

It is found in the cytoplasm. It carries out the reaction uridine(2552) in 23S rRNA + S-adenosyl-L-methionine = 2'-O-methyluridine(2552) in 23S rRNA + S-adenosyl-L-homocysteine + H(+). Its function is as follows. Specifically methylates the uridine in position 2552 of 23S rRNA at the 2'-O position of the ribose in the fully assembled 50S ribosomal subunit. This is Ribosomal RNA large subunit methyltransferase E from Paraburkholderia phymatum (strain DSM 17167 / CIP 108236 / LMG 21445 / STM815) (Burkholderia phymatum).